An 864-amino-acid chain; its full sequence is Leucine--tRNA ligase (864 aa).

The short motif at 42–52 (PYPSGKLHMGH) is the 'HIGH' region element. The short motif at 624–628 (KMSKS) is the 'KMSKS' region element. Residue Lys-627 coordinates ATP.

It belongs to the class-I aminoacyl-tRNA synthetase family.

The protein localises to the cytoplasm. It carries out the reaction tRNA(Leu) + L-leucine + ATP = L-leucyl-tRNA(Leu) + AMP + diphosphate. The protein is Leucine--tRNA ligase of Burkholderia mallei (strain ATCC 23344).